The primary structure comprises 209 residues: Transmembrane 4 L6 family member 19 (209 aa).

Topologically, residues 1 to 16 (MVSSPCTQASSRTCSR) are cytoplasmic. The chain crosses the membrane as a helical span at residues 17–37 (ILGLSLGTAALFAAGANVALL). The Extracellular portion of the chain corresponds to 38–59 (LPNWDVTYLLRGLLGRHAMLGT). A helical membrane pass occupies residues 60–80 (GLWGGGLMVLTAAILISLMGW). Topologically, residues 81–93 (RYGCFSKSGLCRS) are cytoplasmic. A helical membrane pass occupies residues 94–114 (VLTALLSGGLALLGALICFVT). The Extracellular segment spans residues 115–175 (SGVALKDGPF…PSAAVVWHVS (61 aa)). An N-linked (GlcNAc...) asparagine glycan is attached at Asn-133. Residues 176–196 (LFSALLCISLLQLLLVVVHVI) form a helical membrane-spanning segment. An important for homodimerization region spans residues 186–196 (LQLLLVVVHVI). At 197-209 (NSLLGLFCSLCEK) the chain is on the cytoplasmic side.

This sequence belongs to the L6 tetraspanin family. As to quaternary structure, may form homodimers and homooligomers. Interacts with integrins ITGAV and ITGB3. Interacts with components of members of the V0 complex of vacuolar(H+)-ATPase (V-ATPase), including ATP6V0B and ATP6V0D2; this interaction inhibits V1-V0 complex assembly. In adipose tissue, expressed by macrophages.

It localises to the lysosome membrane. It is found in the cytoplasm. The protein localises to the cytoskeleton. The protein resides in the cell projection. Its subcellular location is the filopodium. Negatively regulates vacuolar (H+)-ATPase (V-ATPase) activity by interacting with members of V-ATPase V0 complex and hence inhibiting V1-V0 complex assembly. Required for multinucleation during osteoclast differentiation. The polypeptide is Transmembrane 4 L6 family member 19 (TM4SF19) (Homo sapiens (Human)).